A 784-amino-acid chain; its full sequence is 1-phosphatidylinositol 4,5-bisphosphate phosphodiesterase delta-3-A (784 aa).

The segment at M1 to P25 is disordered. A compositionally biased stretch (basic and acidic residues) spans K16–P25. The 112-residue stretch at L38–D149 folds into the PH domain. The tract at residues K48–R78 is substrate binding. 3 consecutive EF-hand domains span residues K159–D194, L195–R230, and M227–D262. Ca(2+)-binding residues include D172, N174, D176, K178, E183, D208, S210, D212, R214, and E219. Residues Q313–K458 form the PI-PLC X-box domain. Residue H328 is part of the active site. Residues N329, E358, and D360 each contribute to the Ca(2+) site. H373 is a catalytic residue. Ca(2+) is bound at residue E407. The substrate site is built by K456 and K458. Positions F473–A498 are disordered. The segment covering N486–A495 has biased composition (basic and acidic residues). Residues L506–C621 enclose the PI-PLC Y-box domain. Substrate contacts are provided by S534 and R561. Positions C621–K750 constitute a C2 domain. 5 residues coordinate Ca(2+): I664, D666, N690, D719, and D721.

Ca(2+) is required as a cofactor.

Its subcellular location is the membrane. It localises to the cytoplasm. The protein resides in the cleavage furrow. It catalyses the reaction a 1,2-diacyl-sn-glycero-3-phospho-(1D-myo-inositol-4,5-bisphosphate) + H2O = 1D-myo-inositol 1,4,5-trisphosphate + a 1,2-diacyl-sn-glycerol + H(+). In terms of biological role, hydrolyzes the phosphatidylinositol 4,5-bisphosphate (PIP2) to generate 2 second messenger molecules diacylglycerol (DAG) and inositol 1,4,5-trisphosphate (IP3). DAG mediates the activation of protein kinase C (PKC), while IP3 releases Ca(2+) from intracellular stores. This Danio rerio (Zebrafish) protein is 1-phosphatidylinositol 4,5-bisphosphate phosphodiesterase delta-3-A (plcd3a).